The primary structure comprises 135 residues: Retinol-binding protein 1 (135 aa).

The important for interaction with STRA6 stretch occupies residues Arg22–Lys32. Residues Lys41, Met63, and Gln109 each coordinate all-trans-retinol.

It belongs to the calycin superfamily. Fatty-acid binding protein (FABP) family. In terms of assembly, interacts (only as retinol-free apoprotein) with STRA6.

It is found in the cytoplasm. The protein localises to the lipid droplet. Its function is as follows. Cytoplasmic retinol-binding protein. Accepts retinol from the transport protein STRA6, and thereby contributes to retinol uptake, storage and retinoid homeostasis. The sequence is that of Retinol-binding protein 1 (Rbp1) from Mus musculus (Mouse).